Consider the following 185-residue polypeptide: Large ribosomal subunit protein uL5 (185 aa).

Belongs to the universal ribosomal protein uL5 family. As to quaternary structure, part of the 50S ribosomal subunit; part of the 5S rRNA/L5/L18/L25 subcomplex. Contacts the 5S rRNA and the P site tRNA. Forms a bridge to the 30S subunit in the 70S ribosome.

In terms of biological role, this is one of the proteins that bind and probably mediate the attachment of the 5S RNA into the large ribosomal subunit, where it forms part of the central protuberance. In the 70S ribosome it contacts protein S13 of the 30S subunit (bridge B1b), connecting the 2 subunits; this bridge is implicated in subunit movement. Contacts the P site tRNA; the 5S rRNA and some of its associated proteins might help stabilize positioning of ribosome-bound tRNAs. In Bradyrhizobium diazoefficiens (strain JCM 10833 / BCRC 13528 / IAM 13628 / NBRC 14792 / USDA 110), this protein is Large ribosomal subunit protein uL5.